The sequence spans 79 residues: Small ribosomal subunit protein bS18c (79 aa).

It belongs to the bacterial ribosomal protein bS18 family. As to quaternary structure, part of the 30S ribosomal subunit.

It is found in the plastid. Its subcellular location is the chloroplast. This chain is Small ribosomal subunit protein bS18c, found in Chaetosphaeridium globosum (Charophycean green alga).